Here is a 465-residue protein sequence, read N- to C-terminus: uncharacterized protein (465 aa).

The chain crosses the membrane as a helical span at residues 56 to 76 (ILYMIIFAIFGLLPFLIALIF). Residues 177-198 (KFNKSKKSNKINDKTPILNNNN) form a disordered region. Residues 273–293 (LIFLLVSTILLIALIGFILII) traverse the membrane as a helical segment. Positions 411–449 (NNYNNSNNNNNSNNSNSNNNNNNNNNNNNYNNNNYNNNN) are disordered.

It is found in the membrane. This is an uncharacterized protein from Dictyostelium discoideum (Social amoeba).